Here is a 254-residue protein sequence, read N- to C-terminus: 2-dehydro-3-deoxy-D-gluconate 5-dehydrogenase (254 aa).

Tyr-159 serves as the catalytic Proton acceptor.

Belongs to the short-chain dehydrogenases/reductases (SDR) family.

The catalysed reaction is 2-dehydro-3-deoxy-D-gluconate + NAD(+) = 3-deoxy-D-glycero-2,5-hexodiulosonate + NADH + H(+). Involved in the degradation of 3,6-anhydro-L-galactose, which is the major monomeric sugar of red macroalgae. Catalyzes the fourth step of the pathway, the reduction of 3-deoxy-D-glycero-2,5-hexodiulosonate (L-DDGal) to 2-dehydro-3-deoxy-D-gluconate (KDG). The sequence is that of 2-dehydro-3-deoxy-D-gluconate 5-dehydrogenase from Pseudoalteromonas atlantica (strain T6c / ATCC BAA-1087).